Consider the following 218-residue polypeptide: Riboflavin synthase (218 aa).

Lumazine-binding repeat units lie at residues 1–97 and 98–194; these read MFTG…FGGH and IVSG…ERLL. Residues 4–6, 48–50, 62–67, 101–103, lysine 136, 145–147, and 159–164 each bind 2,4-dihydroxypteridine; these read GII, CLT, DLSIET, GHV, SLT, and TIVPHT.

As to quaternary structure, homotrimer.

The enzyme catalyses 2 6,7-dimethyl-8-(1-D-ribityl)lumazine + H(+) = 5-amino-6-(D-ribitylamino)uracil + riboflavin. It functions in the pathway cofactor biosynthesis; riboflavin biosynthesis; riboflavin from 2-hydroxy-3-oxobutyl phosphate and 5-amino-6-(D-ribitylamino)uracil: step 2/2. Its function is as follows. Catalyzes the dismutation of two molecules of 6,7-dimethyl-8-ribityllumazine, resulting in the formation of riboflavin and 5-amino-6-(D-ribitylamino)uracil. In Photobacterium phosphoreum, this protein is Riboflavin synthase.